Here is a 757-residue protein sequence, read N- to C-terminus: Polymeric immunoglobulin receptor (757 aa).

The signal sequence occupies residues 1 to 18; sequence MSRLFLACLLAIFPVVSM. Residues 19–126 enclose the Ig-like V-type 1; required for binding to polymeric IgA and IgM domain; the sequence is KSPIFGPEEV…RGLNFDVSLE (108 aa). The Extracellular portion of the chain corresponds to 19–632; it reads KSPIFGPEEV…TGYSGSSKAL (614 aa). 7 cysteine pairs are disulfide-bonded: C40-C110, C56-C64, C152-C220, C257-C324, C271-C279, C370-C440, and C384-C394. An N-linked (GlcNAc...) asparagine glycan is attached at N83. 4 Ig-like V-type domains span residues 145-237, 250-341, 353-457, and 461-560; these read GRTV…DLQV, RSSV…VQAW, ASPS…LKVV, and PSLK…VYVA. N-linked (GlcNAc...) asparagine glycosylation is found at N420 and N468. 3 cysteine pairs are disulfide-bonded: C481-C543, C485-C519, and C495-C502. The disordered stretch occupies residues 607–627; sequence KDAAGGPGAPADPGRPTGYSG. A helical membrane pass occupies residues 633-653; that stretch reads VSTLVPLALVLVAGVVAIGVV. Residues 654-757 lie on the Cytoplasmic side of the membrane; that stretch reads RARHRKNVDR…AATQNGPTEA (104 aa). Residues S665, S674, S681, and S727 each carry the phosphoserine modification. Residues 679–688 show a composition bias toward basic and acidic residues; that stretch reads ENSRDFEGRD. Positions 679–730 are disordered; sequence ENSRDFEGRDNMGASPEAQETSLGGKDEFATTTEDTVESKEPKKAKRSSKEE.

As to quaternary structure, interacts (mainly via CDR1-like domain) with dimeric IgA. Interacts (mainly via CDR2-like domain) with pentameric IgM. Either free or part of the secretory IgA (sIgA) complex that consists of two, four or five IgA monomers, and two additional non-Ig polypeptides, namely the JCHAIN and the secretory component (the proteolytic product of PIGR). Free secretory component interacts with bacterial antigens toxA of C.difficile and eae of E.coli. Post-translationally, in the absence of dimeric IgA, Ser-727 is phosphorylated which allows PIGR to function normally. N-glycosylated. N-glycosylation is required for anchoring IgA molecules to mucus, but is not necessary for Ig binding. As to expression, found in mammary gland, jejunum, lung, kidney and small intestine.

It localises to the cell membrane. The protein localises to the secreted. In terms of biological role, mediates selective transcytosis of polymeric IgA and IgM across mucosal epithelial cells. Binds polymeric IgA and IgM at the basolateral surface of epithelial cells. The complex is then transported across the cell to be secreted at the apical surface. During this process, a cleavage occurs that separates the extracellular (known as the secretory component) from the transmembrane segment. Functionally, through its N-linked glycans ensures anchoring of secretory IgA (sIgA) molecules to mucus lining the epithelial surface to neutralize extracellular pathogens. On its own (free form) may act as a non-specific microbial scavenger to prevent pathogen interaction with epithelial cells. The sequence is that of Polymeric immunoglobulin receptor (PIGR) from Bos taurus (Bovine).